The following is a 615-amino-acid chain: Angiotensin-converting enzyme (615 aa).

The N-terminal stretch at 1–17 (MRLFLLALLATLAVTQA) is a signal peptide. Residues 19–607 (VKEEIQAKEY…IKNNVHIGWT (589 aa)) form the Peptidase M2 domain. The N-linked (GlcNAc...) asparagine glycan is linked to Asn53. Cysteines 133 and 141 form a disulfide. Asn196 and Asn311 each carry an N-linked (GlcNAc...) asparagine glycan. A disulfide bridge links Cys336 with Cys354. Position 367 (His367) interacts with Zn(2+). The Proton acceptor role is filled by Glu368. Zn(2+)-binding residues include His371 and Glu395. The Proton donor role is filled by His497. Cys522 and Cys540 are disulfide-bonded.

This sequence belongs to the peptidase M2 family. Zn(2+) is required as a cofactor. In terms of processing, glycosylated. In terms of tissue distribution, expressed in vesicular structures in spermatocytes and early spermatids (at protein level).

It localises to the secreted. The protein resides in the extracellular space. It carries out the reaction Release of a C-terminal dipeptide, oligopeptide-|-Xaa-Yaa, when Xaa is not Pro, and Yaa is neither Asp nor Glu. Thus, conversion of angiotensin I to angiotensin II, with increase in vasoconstrictor activity, but no action on angiotensin II.. Inhibited by captopril and, to a lesser extent, by lisinopril, trandolaprilat, fosinoprilat and enalaprilat. May be involved in the specific maturation or degradation of a number of bioactive peptides. May play a role in the contractions of the heart, gut and testes, and in spermatid differentiation. The polypeptide is Angiotensin-converting enzyme (Ance) (Drosophila melanogaster (Fruit fly)).